The primary structure comprises 426 residues: Metacaspase-1B (426 aa).

Residues 1-14 (MSGYPGAGYNGGGY) show a composition bias toward gly residues. A disordered region spans residues 1–111 (MSGYPGAGYN…QAPPPPPQAP (111 aa)). Residues 21-68 (QYGGYYPPQPAYNAYQQPPPQQQQYMVYHQPSPGPQQHQHWNPQQQTP) are compositionally biased toward low complexity. Catalysis depends on residues His-217 and Cys-273.

Belongs to the peptidase C14B family.

Involved in cell death (apoptosis). The chain is Metacaspase-1B (casB) from Neurospora crassa (strain ATCC 24698 / 74-OR23-1A / CBS 708.71 / DSM 1257 / FGSC 987).